Here is a 20-residue protein sequence, read N- to C-terminus: Venom peptide Ocy8 (20 aa).

As to expression, expressed by the venom gland.

It localises to the secreted. This chain is Venom peptide Ocy8, found in Opisthacanthus cayaporum (South American scorpion).